We begin with the raw amino-acid sequence, 921 residues long: GPI ethanolamine phosphate transferase 1 (921 aa).

At 1 to 9 (MKNNTRFTL) the chain is on the cytoplasmic side. A helical membrane pass occupies residues 10 to 30 (IVVGVLFHLLYLWSIFDIYFI). Residues 31 to 457 (SPLVHGMEQK…TTYNWRFIRT (427 aa)) lie on the Lumenal side of the membrane. 5 N-linked (GlcNAc...) asparagine glycosylation sites follow: Asn90, Asn138, Asn198, Asn262, and Asn286. The helical transmembrane segment at 458 to 478 (IVTFGFLGWICYSFMIFLKLF) threads the bilayer. Topologically, residues 479-488 (ILNNSQTTHP) are cytoplasmic. Residues 489–509 (SILNISIFTSLGLILNYILFY) traverse the membrane as a helical segment. Topologically, residues 510–516 (QKSPLNF) are lumenal. A helical transmembrane segment spans residues 517–537 (YLYLIFPLFFWSKIFSNTAII). Residues 538 to 552 (RDGVNEFFKGISKAE) lie on the Cytoplasmic side of the membrane. The helical transmembrane segment at 553–573 (SVIIGLTIISIYEGIVYGFFH) threads the bilayer. At 574–575 (RW) the chain is on the lumenal side. The chain crosses the membrane as a helical span at residues 576–596 (ILSLILVSFAFYPLVCGVTDL). Over 597–599 (FTN) the chain is Cytoplasmic. A helical membrane pass occupies residues 600–620 (LLWILTSVGLSSFTLLDAVKI). A topological domain (lumenal) is located at residue Glu621. Residues 622 to 642 (NLQQIQVAGILIVLSSAYAVM) form a helical membrane-spanning segment. At 643-654 (RLSQDISKYTQH) the chain is on the cytoplasmic side. A helical transmembrane segment spans residues 655–675 (LLSIQIFLVSGMLHFTSKSVI). The Lumenal portion of the chain corresponds to 676–684 (SLQKREGLP). Residues 685–705 (AFAQVGGWAILVISLTIMPFL) form a helical membrane-spanning segment. Topologically, residues 706-728 (HYLKPNNNYQVRLLTIYLTFAPS) are cytoplasmic. A helical transmembrane segment spans residues 729-749 (FIILSISFEALFYFIFTAYIV). At 750 to 777 (QWLQIEKNIKVLKDEQKSDSNGIQLLRV) the chain is on the lumenal side. A helical membrane pass occupies residues 778–798 (AIIGFFLQQIAFFGTGNVASI). Topologically, residues 799–819 (SSFSLDSVYRLLPVFDPFPMG) are cytoplasmic. Residues 820–840 (ALLMLKLIIPYVLLSCGLGIM) traverse the membrane as a helical segment. At 841–849 (NIQLDIKDY) the chain is on the lumenal side. The helical transmembrane segment at 850 to 870 (TISSLIISTSDILSLNFFYLL) threads the bilayer. At 871-878 (KTEGSWLD) the chain is on the cytoplasmic side. Residues 879 to 899 (IGVTISNYCLAILSSLFMLIL) form a helical membrane-spanning segment. The Lumenal segment spans residues 900–921 (EIVGHQLLKNVTRATSSQKKTN). N-linked (GlcNAc...) asparagine glycosylation is present at Asn909.

The protein belongs to the PIGG/PIGN/PIGO family. PIGN subfamily.

Its subcellular location is the endoplasmic reticulum membrane. The protein operates within glycolipid biosynthesis; glycosylphosphatidylinositol-anchor biosynthesis. In terms of biological role, ethanolamine phosphate transferase involved in glycosylphosphatidylinositol-anchor biosynthesis. Transfers ethanolamine phosphate to the first alpha-1,4-linked mannose of the glycosylphosphatidylinositol precursor of GPI-anchor. The chain is GPI ethanolamine phosphate transferase 1 (MCD4) from Candida glabrata (strain ATCC 2001 / BCRC 20586 / JCM 3761 / NBRC 0622 / NRRL Y-65 / CBS 138) (Yeast).